Reading from the N-terminus, the 154-residue chain is Myoglobin (154 aa).

The Globin domain maps to 2-148; sequence GLSDGEWQLV…FRNDMAAQYK (147 aa). At Ser-4 the chain carries Phosphoserine. His-65 provides a ligand contact to nitrite. His-65 lines the O2 pocket. The residue at position 68 (Thr-68) is a Phosphothreonine. A heme b-binding site is contributed by His-94.

Belongs to the globin family. As to quaternary structure, monomeric.

Its subcellular location is the cytoplasm. It localises to the sarcoplasm. It catalyses the reaction Fe(III)-heme b-[protein] + nitric oxide + H2O = Fe(II)-heme b-[protein] + nitrite + 2 H(+). The catalysed reaction is H2O2 + AH2 = A + 2 H2O. In terms of biological role, monomeric heme protein which primary function is to store oxygen and facilitate its diffusion within muscle tissues. Reversibly binds oxygen through a pentacoordinated heme iron and enables its timely and efficient release as needed during periods of heightened demand. Depending on the oxidative conditions of tissues and cells, and in addition to its ability to bind oxygen, it also has a nitrite reductase activity whereby it regulates the production of bioactive nitric oxide. Under stress conditions, like hypoxia and anoxia, it also protects cells against reactive oxygen species thanks to its pseudoperoxidase activity. This Cervus elaphus (Red deer) protein is Myoglobin (MB).